The chain runs to 182 residues: Acireductone dioxygenase (182 aa).

Residues His-100, His-102, Glu-106, and His-145 each contribute to the Fe(2+) site. Positions 100, 102, 106, and 145 each coordinate Ni(2+).

It belongs to the acireductone dioxygenase (ARD) family. As to quaternary structure, monomer. It depends on Fe(2+) as a cofactor. The cofactor is Ni(2+).

The enzyme catalyses 1,2-dihydroxy-5-(methylsulfanyl)pent-1-en-3-one + O2 = 3-(methylsulfanyl)propanoate + CO + formate + 2 H(+). It carries out the reaction 1,2-dihydroxy-5-(methylsulfanyl)pent-1-en-3-one + O2 = 4-methylsulfanyl-2-oxobutanoate + formate + 2 H(+). It functions in the pathway amino-acid biosynthesis; L-methionine biosynthesis via salvage pathway; L-methionine from S-methyl-5-thio-alpha-D-ribose 1-phosphate: step 5/6. Functionally, catalyzes 2 different reactions between oxygen and the acireductone 1,2-dihydroxy-3-keto-5-methylthiopentene (DHK-MTPene) depending upon the metal bound in the active site. Fe-containing acireductone dioxygenase (Fe-ARD) produces formate and 2-keto-4-methylthiobutyrate (KMTB), the alpha-ketoacid precursor of methionine in the methionine recycle pathway. Ni-containing acireductone dioxygenase (Ni-ARD) produces methylthiopropionate, carbon monoxide and formate, and does not lie on the methionine recycle pathway. The sequence is that of Acireductone dioxygenase from Trichormus variabilis (strain ATCC 29413 / PCC 7937) (Anabaena variabilis).